The primary structure comprises 254 residues: Membrane protein US20 (254 aa).

A run of 7 helical transmembrane segments spans residues 31–51, 62–82, 89–109, 114–134, 143–163, 178–198, and 208–228; these read AIFI…WLGF, YSFF…YTLG, ATVL…FQMC, VLVG…GLAF, WKCI…LALL, AFSI…VIFF, and AVCL…MLSG.

The protein resides in the host membrane. In Homo sapiens (Human), this protein is Membrane protein US20 (US20).